A 459-amino-acid polypeptide reads, in one-letter code: Alpha-N-acetylgalactosaminidase (459 aa).

Positions 1–31 (MHNIHRRHFLKAAGAVTAGLVTANIALNANA) form a signal peptide, tat-type signal. NAD(+) is bound by residues 64–65 (ER), aspartate 86, 135–138 (WEWH), 155–156 (EV), and asparagine 184. Residues tyrosine 213, arginine 232, 244–247 (YPTH), and tyrosine 326 each bind substrate. Tyrosine 244 is a binding site for NAD(+).

It belongs to the Gfo/Idh/MocA family. Glycosyl hydrolase 109 subfamily. NAD(+) is required as a cofactor. Predicted to be exported by the Tat system. The position of the signal peptide cleavage has not been experimentally proven.

The enzyme catalyses Cleavage of non-reducing alpha-(1-&gt;3)-N-acetylgalactosamine residues from human blood group A and AB mucin glycoproteins, Forssman hapten and blood group A lacto series glycolipids.. Its function is as follows. Glycosidase that has specific alpha-N-acetylgalactosaminidase activity. The polypeptide is Alpha-N-acetylgalactosaminidase (nagA) (Shewanella oneidensis (strain ATCC 700550 / JCM 31522 / CIP 106686 / LMG 19005 / NCIMB 14063 / MR-1)).